A 403-amino-acid polypeptide reads, in one-letter code: Stearoyl-[acyl-carrier-protein] 9-desaturase 4, chloroplastic (403 aa).

A chloroplast-targeting transit peptide spans 1-44 (MALLLNSTMTVAMKQNPATAVSFMQTTCLGSSFSPPRHLQVSCV). Residues E140, E178, H181, E231, E264, and H267 each contribute to the Fe cation site.

The protein belongs to the fatty acid desaturase type 2 family. In terms of assembly, homodimer. It depends on Fe(2+) as a cofactor. In terms of tissue distribution, preferentially expressed in roots.

The protein localises to the plastid. The protein resides in the chloroplast. The catalysed reaction is octadecanoyl-[ACP] + 2 reduced [2Fe-2S]-[ferredoxin] + O2 + 2 H(+) = (9Z)-octadecenoyl-[ACP] + 2 oxidized [2Fe-2S]-[ferredoxin] + 2 H2O. Its pathway is lipid metabolism; fatty acid metabolism. Functionally, converts stearoyl-ACP to oleoyl-ACP by introduction of a cis double bond between carbons 9 and 10 of the acyl chain. In Arabidopsis thaliana (Mouse-ear cress), this protein is Stearoyl-[acyl-carrier-protein] 9-desaturase 4, chloroplastic (S-ACP-DES4).